Here is a 212-residue protein sequence, read N- to C-terminus: Methylthioribulose-1-phosphate dehydratase (212 aa).

Positions 99 and 101 each coordinate Zn(2+).

The protein belongs to the aldolase class II family. MtnB subfamily. In terms of assembly, homotetramer. The cofactor is Zn(2+).

It catalyses the reaction 5-(methylsulfanyl)-D-ribulose 1-phosphate = 5-methylsulfanyl-2,3-dioxopentyl phosphate + H2O. It functions in the pathway amino-acid biosynthesis; L-methionine biosynthesis via salvage pathway; L-methionine from S-methyl-5-thio-alpha-D-ribose 1-phosphate: step 2/6. Its function is as follows. Catalyzes the dehydration of methylthioribulose-1-phosphate (MTRu-1-P) into 2,3-diketo-5-methylthiopentyl-1-phosphate (DK-MTP-1-P). The polypeptide is Methylthioribulose-1-phosphate dehydratase (Bacillus pumilus (strain SAFR-032)).